Consider the following 205-residue polypeptide: Basigin (205 aa).

The signal sequence occupies residues Met1–Gly18. In terms of domain architecture, Ig-like C2-type spans Ala19–Gly103. Residues Ala19–His205 are Extracellular-facing. Cystine bridges form between Cys41–Cys87 and Cys126–Cys185. N-linked (GlcNAc...) asparagine glycans are attached at residues Asn44, Asn152, and Asn186. An Ig-like V-type domain is found at Pro105 to Thr199.

In terms of assembly, homooligomer. Interacts with VEGFA, KDR/VEGFR2, PPIA/CYPA, SLC16A12, SLC16A11, ATP1B2, MAG, L1CAM and AJAP1. Interacts with SLC16A1; interaction mediates SLC16A1 targeting to the plasma membrane. Interacts with SLC16A3; interaction mediates SLC16A3 targeting to the plasma membrane. Interacts with PPIL2; regulates BSG transport to the cell membrane. Interacts with XKR8; promoting its localization at the cell membrane. Interacts with SLC16A6; this interaction mediates targeting to the plasma membrane.

It is found in the cell membrane. The protein localises to the endoplasmic reticulum membrane. It localises to the basolateral cell membrane. Its function is as follows. Signaling receptor for cyclophilins, essential for PPIA/CYPA and PPIB/CYPB-dependent signaling related to chemotaxis and adhesion of immune cells. Plays an important role in targeting the monocarboxylate transporters SLC16A1/GLUT1, SLC16A3, SLC16A8, SLC16A11 and SLC16A12 to the plasma membrane. Acts as a coreceptor for vascular endothelial growth factor receptor 2 (KDR/VEGFR2) in endothelial cells enhancing its VEGFA-mediated activation and downstream signaling. Promotes angiogenesis through EPAS1/HIF2A-mediated up-regulation of VEGFA and KDR/VEGFR2 in endothelial cells. This is Basigin (BSG) from Bos taurus (Bovine).